Here is a 546-residue protein sequence, read N- to C-terminus: Chaperonin GroEL (546 aa).

ATP contacts are provided by residues 30–33 (TLGP), Lys51, 87–91 (DGTTT), Gly415, 479–481 (NAA), and Asp495.

The protein belongs to the chaperonin (HSP60) family. In terms of assembly, forms a cylinder of 14 subunits composed of two heptameric rings stacked back-to-back. Interacts with the co-chaperonin GroES.

Its subcellular location is the cytoplasm. It carries out the reaction ATP + H2O + a folded polypeptide = ADP + phosphate + an unfolded polypeptide.. Its function is as follows. Together with its co-chaperonin GroES, plays an essential role in assisting protein folding. The GroEL-GroES system forms a nano-cage that allows encapsulation of the non-native substrate proteins and provides a physical environment optimized to promote and accelerate protein folding. This is Chaperonin GroEL from Pseudomonas putida (strain ATCC 47054 / DSM 6125 / CFBP 8728 / NCIMB 11950 / KT2440).